The following is a 298-amino-acid chain: Probable alpha-L-glutamate ligase 2 (298 aa).

Residues methionine 104–glutamate 287 enclose the ATP-grasp domain. Residues lysine 141, glutamate 178 to tyrosine 179, aspartate 187, and arginine 211 to asparagine 213 each bind ATP. Mg(2+) contacts are provided by aspartate 248, glutamate 260, and asparagine 262. Aspartate 248, glutamate 260, and asparagine 262 together coordinate Mn(2+).

This sequence belongs to the RimK family. Requires Mg(2+) as cofactor. The cofactor is Mn(2+).

This Shewanella frigidimarina (strain NCIMB 400) protein is Probable alpha-L-glutamate ligase 2.